Reading from the N-terminus, the 375-residue chain is Alcohol dehydrogenase 1 (375 aa).

Ser-2 is modified (N-acetylserine). Cys-47, His-68, Cys-98, Cys-101, Cys-104, Cys-112, and Cys-175 together coordinate Zn(2+). Residues 200-205 (WSGRVG), Asp-224, and Lys-229 each bind NAD(+). Lys-234 bears the N6-succinyllysine mark. 293-295 (VGV) provides a ligand contact to NAD(+). Lys-340 is modified (N6-succinyllysine). Arg-370 is an NAD(+) binding site.

It belongs to the zinc-containing alcohol dehydrogenase family. Class-I subfamily. As to quaternary structure, homodimer. Requires Zn(2+) as cofactor.

It is found in the cytoplasm. The catalysed reaction is a primary alcohol + NAD(+) = an aldehyde + NADH + H(+). The enzyme catalyses a secondary alcohol + NAD(+) = a ketone + NADH + H(+). This chain is Alcohol dehydrogenase 1 (ADH1), found in Geomys knoxjonesi (Jones' pocket gopher).